The sequence spans 364 residues: Fructose-bisphosphate aldolase B (364 aa).

Ala2 carries the N-acetylalanine modification. An N6-succinyllysine modification is found at Lys13. At Ser36 the chain carries Phosphoserine. Thr39 is subject to Phosphothreonine. Position 43 (Arg43) interacts with beta-D-fructose 1,6-bisphosphate. Ser89 carries the post-translational modification Phosphoserine. At Thr119 the chain carries Phosphothreonine. Position 121 is an N6-succinyllysine (Lys121). Position 132 is a phosphoserine (Ser132). The Proton acceptor role is filled by Glu188. The active-site Schiff-base intermediate with dihydroxyacetone-P is the Lys230. 4 positions are modified to phosphoserine: Ser272, Ser276, Ser299, and Ser301. Beta-D-fructose 1,6-bisphosphate is bound at residue 272 to 274 (SGG). Arg304 serves as a coordination point for beta-D-fructose 1,6-bisphosphate. Ser309 is modified (phosphoserine). Lys317 is modified (N6-succinyllysine).

The protein belongs to the class I fructose-bisphosphate aldolase family. Homotetramer. Interacts with BBS1, BBS2, BBS4 and BBS7. Forms a ternary complex with G6PD and TP53; this interaction is direct.

The protein resides in the cytoplasm. The protein localises to the cytosol. It is found in the cytoskeleton. It localises to the microtubule organizing center. Its subcellular location is the centrosome. The protein resides in the centriolar satellite. It catalyses the reaction beta-D-fructose 1,6-bisphosphate = D-glyceraldehyde 3-phosphate + dihydroxyacetone phosphate. It carries out the reaction beta-D-fructose 1-phosphate = D-glyceraldehyde + dihydroxyacetone phosphate. The protein operates within carbohydrate degradation; glycolysis; D-glyceraldehyde 3-phosphate and glycerone phosphate from D-glucose: step 4/4. Its pathway is carbohydrate biosynthesis; gluconeogenesis. It participates in carbohydrate metabolism; fructose metabolism. In terms of biological role, catalyzes the aldol cleavage of fructose 1,6-biphosphate to form two triosephosphates dihydroxyacetone phosphate and D-glyceraldehyde 3-phosphate in glycolysis as well as the reverse stereospecific aldol addition reaction in gluconeogenesis. In fructolysis, metabolizes fructose 1-phosphate derived from the phosphorylation of dietary fructose by fructokinase into dihydroxyacetone phosphate and D-glyceraldehyde. Acts as an adapter independently of its enzymatic activity, exerts a tumor suppressor role by stabilizing the ternary complex with G6PD and TP53 to inhibit G6PD activity and keep oxidative pentose phosphate metabolism in check. This chain is Fructose-bisphosphate aldolase B, found in Homo sapiens (Human).